Here is a 41-residue protein sequence, read N- to C-terminus: MKDFVTYLSTAPVIALAWMSFTAGLLIEINRFFPDPLVFTF.

A helical membrane pass occupies residues 7–27 (YLSTAPVIALAWMSFTAGLLI).

It belongs to the PsaJ family.

It localises to the plastid. The protein localises to the chloroplast thylakoid membrane. Functionally, may help in the organization of the PsaE and PsaF subunits. The polypeptide is Photosystem I reaction center subunit IX (Tupiella akineta (Green alga)).